Consider the following 528-residue polypeptide: Lanosterol 14-alpha demethylase (528 aa).

A helical transmembrane segment spans residues 15-37 (LSLSVTQQISILLGVPFVYNLVW). Tyrosine 64 lines the oteseconazole pocket. Tyrosine 118 lines the itraconazole pocket. Glycine 307 provides a ligand contact to posaconazole. Histidine 377 lines the oteseconazole pocket. Cysteine 470 contributes to the heme binding site.

It belongs to the cytochrome P450 family. The cofactor is heme.

The protein resides in the endoplasmic reticulum membrane. The enzyme catalyses a 14alpha-methyl steroid + 3 reduced [NADPH--hemoprotein reductase] + 3 O2 = a Delta(14) steroid + formate + 3 oxidized [NADPH--hemoprotein reductase] + 4 H2O + 4 H(+). It catalyses the reaction a 14alpha-methyl steroid + reduced [NADPH--hemoprotein reductase] + O2 = a 14alpha-hydroxymethyl steroid + oxidized [NADPH--hemoprotein reductase] + H2O + H(+). The catalysed reaction is a 14alpha-hydroxymethyl steroid + reduced [NADPH--hemoprotein reductase] + O2 = a 14alpha-formyl steroid + oxidized [NADPH--hemoprotein reductase] + 2 H2O + H(+). It carries out the reaction a 14alpha-formyl steroid + reduced [NADPH--hemoprotein reductase] + O2 = a Delta(14) steroid + formate + oxidized [NADPH--hemoprotein reductase] + H2O + 2 H(+). The enzyme catalyses lanosterol + 3 reduced [NADPH--hemoprotein reductase] + 3 O2 = 4,4-dimethyl-5alpha-cholesta-8,14,24-trien-3beta-ol + formate + 3 oxidized [NADPH--hemoprotein reductase] + 4 H2O + 4 H(+). It catalyses the reaction lanosterol + reduced [NADPH--hemoprotein reductase] + O2 = 32-hydroxylanosterol + oxidized [NADPH--hemoprotein reductase] + H2O + H(+). The catalysed reaction is 32-hydroxylanosterol + reduced [NADPH--hemoprotein reductase] + O2 = 32-oxolanosterol + oxidized [NADPH--hemoprotein reductase] + 2 H2O + H(+). It carries out the reaction 32-oxolanosterol + reduced [NADPH--hemoprotein reductase] + O2 = 4,4-dimethyl-5alpha-cholesta-8,14,24-trien-3beta-ol + formate + oxidized [NADPH--hemoprotein reductase] + H2O + 2 H(+). The enzyme catalyses eburicol + 3 reduced [NADPH--hemoprotein reductase] + 3 O2 = 14-demethyleburicol + formate + 3 oxidized [NADPH--hemoprotein reductase] + 4 H2O + 4 H(+). It catalyses the reaction eburicol + reduced [NADPH--hemoprotein reductase] + O2 = 32-hydroxyeburicol + oxidized [NADPH--hemoprotein reductase] + H2O + H(+). The catalysed reaction is 32-hydroxyeburicol + reduced [NADPH--hemoprotein reductase] + O2 = 32-oxoeburicol + oxidized [NADPH--hemoprotein reductase] + 2 H2O + H(+). It carries out the reaction 32-oxoeburicol + reduced [NADPH--hemoprotein reductase] + O2 = 14-demethyleburicol + formate + oxidized [NADPH--hemoprotein reductase] + H2O + 2 H(+). It participates in steroid biosynthesis; zymosterol biosynthesis; zymosterol from lanosterol: step 1/6. With respect to regulation, the catalytic activity is inhibited by the binding of azoles clotrimazole, miconazole, fluconazole, ketoconazole, oteseconazole (VT-1161), tetraconazole, the triazole SCH39304, and the triazole derivative ICI 153066. In terms of biological role, sterol 14alpha-demethylase that plays a critical role in the third module of ergosterol biosynthesis pathway, being ergosterol the major sterol component in fungal membranes that participates in a variety of functions. The third module or late pathway involves the ergosterol synthesis itself through consecutive reactions that mainly occur in the endoplasmic reticulum (ER) membrane. In filamentous fungi, during the initial step of this module, lanosterol (lanosta-8,24-dien-3beta-ol) can be metabolized to eburicol. Sterol 14alpha-demethylase catalyzes the three-step oxidative removal of the 14alpha-methyl group (C-32) of both these sterols in the form of formate, and converts eburicol and lanosterol to 14-demethyleburicol (4,4,24-trimethylergosta-8,14,24(28)-trienol) and 4,4-dimethyl-5alpha-cholesta-8,14,24-trien-3beta-ol, respectively, which are further metabolized by other enzymes in the pathway to ergosterol. Can also use substrates not intrinsic to fungi, such as 24,25-dihydrolanosterol (DHL), producing 4,4-dimethyl-8,14-cholestadien-3-beta-ol, but at lower rates than the endogenous substrates. The polypeptide is Lanosterol 14-alpha demethylase (Candida albicans (strain SC5314 / ATCC MYA-2876) (Yeast)).